A 284-amino-acid polypeptide reads, in one-letter code: Ermin (284 aa).

Positions 1 to 23 (MTDVPATFTQAECNGDKPPENGQ) are disordered. Ser-73 carries the phosphoserine modification. Residues 110–251 (REGHQWEKIP…PTLGKKSDIS (142 aa)) are disordered. Basic and acidic residues-rich tracts occupy residues 126–140 (EIRR…QPLK) and 171–183 (LHSK…KVWD). The span at 184–200 (EEIDDDDDDNCNNDEDE) shows a compositional bias: acidic residues. Basic and acidic residues predominate over residues 201 to 220 (VRVIEFKKKHEEVSQFKEEG). A phosphoserine mark is found at Ser-214, Ser-226, Ser-230, and Ser-233. A compositionally biased stretch (low complexity) spans 225–235 (DSPLSSASSQA). Thr-237 is subject to Phosphothreonine. Residues 265–284 (KIRKGNTKQRIDEFESMMHL) form a binds actin region.

Binds actin. Highly expressed in adult and fetal brain. Expressed at intermediate levels in the lung and liver.

It is found in the cytoplasm. The protein localises to the cytoskeleton. Functionally, plays a role in cytoskeletal rearrangements during the late wrapping and/or compaction phases of myelinogenesis as well as in maintenance and stability of myelin sheath in the adult. May play an important role in late-stage oligodendroglia maturation, myelin/Ranvier node formation during CNS development, and in the maintenance and plasticity of related structures in the mature CNS. The protein is Ermin (ERMN) of Homo sapiens (Human).